The following is a 190-amino-acid chain: Threonylcarbamoyl-AMP synthase (190 aa).

Residues 7-190 (GDAIAAAIDV…ALTGELFRQG (184 aa)) enclose the YrdC-like domain.

This sequence belongs to the SUA5 family. TsaC subfamily.

It is found in the cytoplasm. It carries out the reaction L-threonine + hydrogencarbonate + ATP = L-threonylcarbamoyladenylate + diphosphate + H2O. Functionally, required for the formation of a threonylcarbamoyl group on adenosine at position 37 (t(6)A37) in tRNAs that read codons beginning with adenine. Catalyzes the conversion of L-threonine, HCO(3)(-)/CO(2) and ATP to give threonylcarbamoyl-AMP (TC-AMP) as the acyladenylate intermediate, with the release of diphosphate. The protein is Threonylcarbamoyl-AMP synthase of Shigella dysenteriae serotype 1 (strain Sd197).